A 1098-amino-acid polypeptide reads, in one-letter code: Probable arabinosyltransferase B (1098 aa).

The next 12 helical transmembrane spans lie at 28 to 50, 217 to 239, 271 to 293, 402 to 419, 434 to 456, 472 to 494, 541 to 558, 570 to 587, 597 to 619, 626 to 648, 663 to 685, and 698 to 720; these read WVAT…LPVV, LKLL…LWRL, ASWR…WHVI, LRPE…YVLI, AVVT…AALV, LVGT…TVVF, FGFL…FIML, PAWR…FLMF, GLFA…PSVL, MAFL…GWWY, IDGI…YAAW, and LIRA…VFVA.

This sequence belongs to the emb family.

Its subcellular location is the cell membrane. In terms of biological role, arabinosyl transferase responsible for the polymerization of arabinose into the arabinan of arabinogalactan. The protein is Probable arabinosyltransferase B (embB) of Mycobacterium tuberculosis (strain CDC 1551 / Oshkosh).